Here is a 242-residue protein sequence, read N- to C-terminus: Phosphoribosylaminoimidazole-succinocarboxamide synthase (242 aa).

This sequence belongs to the SAICAR synthetase family.

The catalysed reaction is 5-amino-1-(5-phospho-D-ribosyl)imidazole-4-carboxylate + L-aspartate + ATP = (2S)-2-[5-amino-1-(5-phospho-beta-D-ribosyl)imidazole-4-carboxamido]succinate + ADP + phosphate + 2 H(+). Its pathway is purine metabolism; IMP biosynthesis via de novo pathway; 5-amino-1-(5-phospho-D-ribosyl)imidazole-4-carboxamide from 5-amino-1-(5-phospho-D-ribosyl)imidazole-4-carboxylate: step 1/2. The chain is Phosphoribosylaminoimidazole-succinocarboxamide synthase from Ehrlichia chaffeensis (strain ATCC CRL-10679 / Arkansas).